The following is a 345-amino-acid chain: Chorismate synthase (345 aa).

It belongs to the chorismate synthase family. In terms of assembly, homotetramer. Requires FMNH2 as cofactor.

The catalysed reaction is 5-O-(1-carboxyvinyl)-3-phosphoshikimate = chorismate + phosphate. The protein operates within metabolic intermediate biosynthesis; chorismate biosynthesis; chorismate from D-erythrose 4-phosphate and phosphoenolpyruvate: step 7/7. The protein is Chorismate synthase (aroC) of Carsonella ruddii (strain PV).